Here is a 558-residue protein sequence, read N- to C-terminus: Membrane protein insertase YidC (558 aa).

6 helical membrane-spanning segments follow: residues 5–25 (IINL…WQYF), 332–352 (AIDF…MNFF), 355–375 (YVGN…LLMF), 429–449 (LPIL…YVTI), 474–494 (LFGL…WPIL), and 520–540 (FMPL…LIYW).

Belongs to the OXA1/ALB3/YidC family. Type 1 subfamily. Interacts with the Sec translocase complex via SecD. Specifically interacts with transmembrane segments of nascent integral membrane proteins during membrane integration.

It localises to the cell inner membrane. In terms of biological role, required for the insertion and/or proper folding and/or complex formation of integral membrane proteins into the membrane. Involved in integration of membrane proteins that insert both dependently and independently of the Sec translocase complex, as well as at least some lipoproteins. Aids folding of multispanning membrane proteins. The protein is Membrane protein insertase YidC of Rickettsia typhi (strain ATCC VR-144 / Wilmington).